A 213-amino-acid chain; its full sequence is Putative amidate substrates transporter protein (213 aa).

The next 6 membrane-spanning stretches (helical) occupy residues 4–20, 32–48, 56–72, 116–132, 146–162, and 172–188; these read VGLFYVGAVLIIDGLML, LNFFVGGLQVVTPTVLI, AVIFAASGLYLFGFTYL, VIWLLWAVLWFMLFLLL, VAVAEGVITAAVPAFLI, and LPAAVIAVIGFAAVVLA.

This sequence belongs to the AmiS/UreI family.

The protein localises to the cell membrane. Its function is as follows. Possible transporter that might be responsible for the adsorption of amidase substrates or release of their hydrolysis products. In Mycolicibacterium smegmatis (Mycobacterium smegmatis), this protein is Putative amidate substrates transporter protein.